Reading from the N-terminus, the 115-residue chain is Large ribosomal subunit protein bL20 (115 aa).

It belongs to the bacterial ribosomal protein bL20 family.

In terms of biological role, binds directly to 23S ribosomal RNA and is necessary for the in vitro assembly process of the 50S ribosomal subunit. It is not involved in the protein synthesizing functions of that subunit. The sequence is that of Large ribosomal subunit protein bL20 from Microcystis aeruginosa (strain NIES-843 / IAM M-2473).